We begin with the raw amino-acid sequence, 315 residues long: Putative peptide transport system permease protein BMEII0209 (315 aa).

6 helical membrane passes run 13–33, 102–122, 136–156, 178–198, 238–258, and 287–307; these read AIPVMLIVAILTFLLMKLLPG, LALLAFAITIPVGIIMGVVAA, LALLGVSVPSFWLAILAVILF, WLRSLILPASILALFQIGYLA, VSVLTVSGYIFSLLIGGSVVI, and MLFLGFLFVAINVLVDILYTI. One can recognise an ABC transmembrane type-1 domain in the interval 96–305; the sequence is LPVTISLALL…AINVLVDILY (210 aa).

The protein belongs to the binding-protein-dependent transport system permease family. In terms of assembly, the complex is composed of two ATP-binding proteins (BMEII0205 and BMEII0206), two transmembrane proteins (BMEII0207/BMEII0208 and BMEII0209) and a solute-binding protein (BMEII0210).

Its subcellular location is the cell inner membrane. Probably part of an ABC transporter complex that could be involved in peptide import. Probably responsible for the translocation of the substrate across the membrane. In Brucella melitensis biotype 1 (strain ATCC 23456 / CCUG 17765 / NCTC 10094 / 16M), this protein is Putative peptide transport system permease protein BMEII0209.